The following is a 311-amino-acid chain: Light-independent protochlorophyllide reductase iron-sulfur ATP-binding protein (311 aa).

ATP contacts are provided by residues 10–15 and Lys-39; that span reads GIGKST. Position 14 (Ser-14) interacts with Mg(2+). 2 residues coordinate [4Fe-4S] cluster: Cys-95 and Cys-129. 180-181 is a binding site for ATP; that stretch reads NR.

This sequence belongs to the NifH/BchL/ChlL family. As to quaternary structure, homodimer. Protochlorophyllide reductase is composed of three subunits; ChlL, ChlN and ChlB. It depends on [4Fe-4S] cluster as a cofactor.

Its subcellular location is the plastid. The protein localises to the chloroplast. The enzyme catalyses chlorophyllide a + oxidized 2[4Fe-4S]-[ferredoxin] + 2 ADP + 2 phosphate = protochlorophyllide a + reduced 2[4Fe-4S]-[ferredoxin] + 2 ATP + 2 H2O. It participates in porphyrin-containing compound metabolism; chlorophyll biosynthesis (light-independent). In terms of biological role, component of the dark-operative protochlorophyllide reductase (DPOR) that uses Mg-ATP and reduced ferredoxin to reduce ring D of protochlorophyllide (Pchlide) to form chlorophyllide a (Chlide). This reaction is light-independent. The L component serves as a unique electron donor to the NB-component of the complex, and binds Mg-ATP. In Oltmannsiellopsis viridis (Marine flagellate), this protein is Light-independent protochlorophyllide reductase iron-sulfur ATP-binding protein.